We begin with the raw amino-acid sequence, 430 residues long: Adenylosuccinate synthetase (430 aa).

GTP is bound by residues Gly12–Lys18 and Gly40–Thr42. The Proton acceptor role is filled by Asp13. Residues Asp13 and Gly40 each coordinate Mg(2+). Residues Asp13–Lys16, Asn38–His41, Thr130, Arg144, Gln224, Thr239, and Arg303 each bind IMP. His41 (proton donor) is an active-site residue. Val299–Arg305 contributes to the substrate binding site. Residues Arg305, Lys331–Asp333, and Ser413–Ser415 each bind GTP.

Belongs to the adenylosuccinate synthetase family. Homodimer. It depends on Mg(2+) as a cofactor.

Its subcellular location is the cytoplasm. The enzyme catalyses IMP + L-aspartate + GTP = N(6)-(1,2-dicarboxyethyl)-AMP + GDP + phosphate + 2 H(+). The protein operates within purine metabolism; AMP biosynthesis via de novo pathway; AMP from IMP: step 1/2. Plays an important role in the de novo pathway of purine nucleotide biosynthesis. Catalyzes the first committed step in the biosynthesis of AMP from IMP. This is Adenylosuccinate synthetase from Nitrobacter winogradskyi (strain ATCC 25391 / DSM 10237 / CIP 104748 / NCIMB 11846 / Nb-255).